Consider the following 89-residue polypeptide: Large ribosomal subunit protein bL27 (89 aa).

The interval 1 to 20 (MAHKKAGGSSRNGRDSESKR) is disordered.

This sequence belongs to the bacterial ribosomal protein bL27 family.

The chain is Large ribosomal subunit protein bL27 from Bartonella bacilliformis (strain ATCC 35685 / KC583 / Herrer 020/F12,63).